A 289-amino-acid chain; its full sequence is Pyridoxal kinase PdxY (289 aa).

Substrate is bound by residues Ser9 and 44-45 (TQ). Residues Asp112, Ala144, Glu149, Lys183, and 210-213 (RPLV) contribute to the ATP site. A substrate-binding site is contributed by Asp225.

This sequence belongs to the pyridoxine kinase family. PdxY subfamily. Homodimer. The cofactor is Mg(2+).

It carries out the reaction pyridoxal + ATP = pyridoxal 5'-phosphate + ADP + H(+). Its pathway is cofactor metabolism; pyridoxal 5'-phosphate salvage; pyridoxal 5'-phosphate from pyridoxal: step 1/1. Its function is as follows. Pyridoxal kinase involved in the salvage pathway of pyridoxal 5'-phosphate (PLP). Catalyzes the phosphorylation of pyridoxal to PLP. The chain is Pyridoxal kinase PdxY from Proteus mirabilis.